Here is a 415-residue protein sequence, read N- to C-terminus: Histidine--tRNA ligase (415 aa).

The protein belongs to the class-II aminoacyl-tRNA synthetase family. In terms of assembly, homodimer.

The protein resides in the cytoplasm. The enzyme catalyses tRNA(His) + L-histidine + ATP = L-histidyl-tRNA(His) + AMP + diphosphate + H(+). This chain is Histidine--tRNA ligase, found in Rickettsia canadensis (strain McKiel).